Consider the following 160-residue polypeptide: Nucleotide-binding protein TERTU_3542 (160 aa).

Belongs to the YajQ family.

Functionally, nucleotide-binding protein. This Teredinibacter turnerae (strain ATCC 39867 / T7901) protein is Nucleotide-binding protein TERTU_3542.